A 41-amino-acid polypeptide reads, in one-letter code: Photosystem II reaction center protein Y (41 aa).

M1 is modified (N-formylmethionine). At 1 to 4 the chain is on the lumenal side; sequence MDWR. Residues 5–23 form a helical membrane-spanning segment; it reads VLVVLLPVLLAAGWAVRNI. Residues 24-41 are Cytoplasmic-facing; the sequence is LPYAVKQVQKLLQKAKAA.

The protein belongs to the PsbY family. PSII is composed of 1 copy each of membrane proteins PsbA, PsbB, PsbC, PsbD, PsbE, PsbF, PsbH, PsbI, PsbJ, PsbK, PsbL, PsbM, PsbT, PsbX, PsbY, PsbZ, Psb30/Ycf12, peripheral proteins PsbO, CyanoQ (PsbQ), PsbU, PsbV and a large number of cofactors. It forms dimeric complexes. This protein is only loosely associated with PSII, and is not often found in crystals. Found on the exterior of the PSII dimer, near cytochrome b559 (psbE and psbF). It depends on PSII binds multiple chlorophylls, carotenoids and specific lipids. as a cofactor.

Its subcellular location is the cellular thylakoid membrane. Loosely associated component of the core of photosystem II, it is not always seen in crystals. PSII is a light-driven water plastoquinone oxidoreductase, using light energy to abstract electrons from H(2)O, generating a proton gradient subsequently used for ATP formation. This is Photosystem II reaction center protein Y from Thermosynechococcus vestitus (strain NIES-2133 / IAM M-273 / BP-1).